Here is a 224-residue protein sequence, read N- to C-terminus: Peroxiredoxin-6 (224 aa).

Residues 5–169 (LLLGDVAPNF…ILRVVISLQL (165 aa)) form the Thioredoxin domain. The tract at residues 31 to 40 (DSWGILFSHP) is required and sufficient for targeting to lysosomes and lamellar bodies. T44 bears the Phosphothreonine mark. C47 (cysteine sulfenic acid (-SOH) intermediate; for peroxidase activity) is an active-site residue. K63 is subject to N6-acetyllysine. Y89 carries the post-translational modification Phosphotyrosine. The active-site For phospholipase activity is the D140. The residue at position 177 (T177) is a Phosphothreonine; by MAPK. Position 209 is an N6-acetyllysine; alternate (K209). Position 209 is an N6-succinyllysine; alternate (K209).

Belongs to the peroxiredoxin family. Prx6 subfamily. As to quaternary structure, homodimer. Interacts with GSTP1; mediates PRDX6 glutathionylation and regeneration. Interacts with APEX1. Interacts with STH. May interact with FAM168B. May interact with HTR2A. Irreversibly inactivated by overoxidation of Cys-47 to sulfinic acid (Cys-SO(2)H) and sulfonic acid (Cys-SO(3)H) forms upon oxidative stress. In terms of processing, phosphorylation at Thr-177 by MAP kinases increases the phospholipase activity of the enzyme. The phosphorylated form exhibits a greater lysophosphatidylcholine acyltransferase activity compared to the non-phosphorylated form.

It localises to the cytoplasm. The protein resides in the lysosome. It carries out the reaction a hydroperoxide + 2 glutathione = an alcohol + glutathione disulfide + H2O. The catalysed reaction is a 1,2-diacyl-sn-glycero-3-phosphocholine + H2O = a 1-acyl-sn-glycero-3-phosphocholine + a fatty acid + H(+). It catalyses the reaction a 1-acyl-sn-glycero-3-phosphocholine + an acyl-CoA = a 1,2-diacyl-sn-glycero-3-phosphocholine + CoA. The enzyme catalyses 1-hexadecanoyl-sn-glycero-3-phosphocholine + hexadecanoyl-CoA = 1,2-dihexadecanoyl-sn-glycero-3-phosphocholine + CoA. It carries out the reaction 1,2-dihexadecanoyl-sn-glycero-3-phosphocholine + H2O = 1-hexadecanoyl-sn-glycero-3-phosphocholine + hexadecanoate + H(+). Its function is as follows. Thiol-specific peroxidase that catalyzes the reduction of hydrogen peroxide and organic hydroperoxides to water and alcohols, respectively. Can reduce H(2)O(2) and short chain organic, fatty acid, and phospholipid hydroperoxides. Also has phospholipase activity, and can therefore either reduce the oxidized sn-2 fatty acyl group of phospholipids (peroxidase activity) or hydrolyze the sn-2 ester bond of phospholipids (phospholipase activity). These activities are dependent on binding to phospholipids at acidic pH and to oxidized phospholipds at cytosolic pH. Plays a role in cell protection against oxidative stress by detoxifying peroxides and in phospholipid homeostasis. Exhibits acyl-CoA-dependent lysophospholipid acyltransferase which mediates the conversion of lysophosphatidylcholine (1-acyl-sn-glycero-3-phosphocholine or LPC) into phosphatidylcholine (1,2-diacyl-sn-glycero-3-phosphocholine or PC). Shows a clear preference for LPC as the lysophospholipid and for palmitoyl CoA as the fatty acyl substrate. The chain is Peroxiredoxin-6 (PRDX6) from Pongo abelii (Sumatran orangutan).